A 371-amino-acid chain; its full sequence is UDP-N-acetylglucosamine--N-acetylmuramyl-(pentapeptide) pyrophosphoryl-undecaprenol N-acetylglucosamine transferase (371 aa).

UDP-N-acetyl-alpha-D-glucosamine-binding positions include 15–17, Asn126, Arg172, Ser199, Ile256, 275–280, and Gln301; these read TGG and ALTVSE.

This sequence belongs to the glycosyltransferase 28 family. MurG subfamily.

It localises to the cell inner membrane. The enzyme catalyses di-trans,octa-cis-undecaprenyl diphospho-N-acetyl-alpha-D-muramoyl-L-alanyl-D-glutamyl-meso-2,6-diaminopimeloyl-D-alanyl-D-alanine + UDP-N-acetyl-alpha-D-glucosamine = di-trans,octa-cis-undecaprenyl diphospho-[N-acetyl-alpha-D-glucosaminyl-(1-&gt;4)]-N-acetyl-alpha-D-muramoyl-L-alanyl-D-glutamyl-meso-2,6-diaminopimeloyl-D-alanyl-D-alanine + UDP + H(+). Its pathway is cell wall biogenesis; peptidoglycan biosynthesis. Cell wall formation. Catalyzes the transfer of a GlcNAc subunit on undecaprenyl-pyrophosphoryl-MurNAc-pentapeptide (lipid intermediate I) to form undecaprenyl-pyrophosphoryl-MurNAc-(pentapeptide)GlcNAc (lipid intermediate II). This chain is UDP-N-acetylglucosamine--N-acetylmuramyl-(pentapeptide) pyrophosphoryl-undecaprenol N-acetylglucosamine transferase, found in Francisella tularensis subsp. tularensis (strain WY96-3418).